The primary structure comprises 926 residues: Protein transport protein SEC24-2 (926 aa).

The interval 1–54 is disordered; that stretch reads MSHHKKRVYPQAQAQYGQSATPLQQPAQLVPPQDPAAAGMSYAQMGMPPQGAAA. A compositionally biased stretch (low complexity) spans 20–54; sequence ATPLQQPAQLVPPQDPAAAGMSYAQMGMPPQGAAA. Zn(2+)-binding residues include cysteine 231, cysteine 234, cysteine 253, and cysteine 256. Residues 231 to 256 form a zinc finger-like region; it reads CRRCRSYMNPFITFIEQGRRWRCNFC.

The protein belongs to the SEC23/SEC24 family. SEC24 subfamily. The COPII coat is composed of at least 5 proteins: the SEC23/24 complex, the SEC13/31 complex, and the protein SAR1. Golgi apparatus membrane; Peripheral membrane protein; Cytoplasmic side.

The protein resides in the cytoplasm. It localises to the cytoplasmic vesicle. The protein localises to the COPII-coated vesicle membrane. It is found in the endoplasmic reticulum membrane. Its subcellular location is the golgi apparatus membrane. Component of the coat protein complex II (COPII) which promotes the formation of transport vesicles from the endoplasmic reticulum (ER). The coat has two main functions, the physical deformation of the endoplasmic reticulum membrane into vesicles and the selection of cargo molecules. This Saccharomyces uvarum (strain ATCC 76518 / CBS 7001 / CLIB 283 / NBRC 10550 / MCYC 623 / NCYC 2669 / NRRL Y-11845) (Yeast) protein is Protein transport protein SEC24-2 (SEC242).